Consider the following 281-residue polypeptide: Peptidyl-prolyl cis-trans isomerase CYP28, chloroplastic (281 aa).

Residues 1–24 (MASSSILIPPILTRRNLLLSTTIA) constitute a chloroplast transit peptide. The PPIase cyclophilin-type domain maps to 66–268 (STTPCSDSTP…KTVFISGCGE (203 aa)).

This sequence belongs to the cyclophilin-type PPIase family. Post-translationally, S-nytrosylated during the hypersensitive disease resistance response. As to expression, ubiquitous. Not detected in roots.

It localises to the plastid. It is found in the chloroplast. The catalysed reaction is [protein]-peptidylproline (omega=180) = [protein]-peptidylproline (omega=0). Functionally, PPIases accelerate the folding of proteins. It catalyzes the cis-trans isomerization of proline imidic peptide bonds in oligopeptides. This chain is Peptidyl-prolyl cis-trans isomerase CYP28, chloroplastic (CYP28), found in Arabidopsis thaliana (Mouse-ear cress).